The chain runs to 532 residues: Apoptosis-inducing factor 1, mitochondrial (532 aa).

Residues 1-26 (MIRNLTKLTKFTIGNRFYQSSSKGRF) constitute a mitochondrion transit peptide. A disordered region spans residues 63–84 (STPSIDVKEKKSQPPKTKEDYQ). Positions 98-440 (YVIIGGGTAA…APYTYQPFFW (343 aa)) are FAD-dependent oxidoreductase. FAD is bound by residues 102-106 (GGGTA), 128-129 (KE), arginine 136, and lysine 141. Residue tryptophan 160 coordinates NAD(+). FAD is bound by residues valine 188 and arginine 236. NAD(+)-binding positions include 260 to 263 (GGFL), glutamate 288, and glycine 353. Aspartate 392 contacts FAD. The Nuclear localization signal signature appears at 400–406 (SLGVRRR). Residues 408-409 (EH), tryptophan 440, and glutamate 450 contribute to the NAD(+) site. FAD-binding positions include 409-410 (HH) and tryptophan 440.

It belongs to the FAD-dependent oxidoreductase family. It depends on FAD as a cofactor.

It localises to the mitochondrion. The protein localises to the cytoplasm. It is found in the nucleus. The catalysed reaction is A + NADH + H(+) = AH2 + NAD(+). In terms of biological role, probable NADH oxidoreductase that acts as a caspase-independent mitochondrial effector of apoptotic cell death. The sequence is that of Apoptosis-inducing factor 1, mitochondrial (aif) from Dictyostelium discoideum (Social amoeba).